Reading from the N-terminus, the 592-residue chain is Arginine--tRNA ligase (592 aa).

Residues 134 to 144 (ANPTGPLHVGH) carry the 'HIGH' region motif.

It belongs to the class-I aminoacyl-tRNA synthetase family. In terms of assembly, monomer.

The protein localises to the cytoplasm. The enzyme catalyses tRNA(Arg) + L-arginine + ATP = L-arginyl-tRNA(Arg) + AMP + diphosphate. The sequence is that of Arginine--tRNA ligase from Coxiella burnetii (strain CbuG_Q212) (Coxiella burnetii (strain Q212)).